Consider the following 719-residue polypeptide: 2'-5'-oligoadenylate synthase 2 (719 aa).

Residue G2 is the site of N-myristoyl glycine attachment. 2 OAS domain regions span residues V11 to V335 and T343 to P683. K378 bears the N6-acetyllysine mark. S396 lines the ATP pocket. Residues D408, D410, and D481 each coordinate Mg(2+). ATP-binding residues include R544 and K547.

The protein belongs to the 2-5A synthase family. As to quaternary structure, homodimer. The cofactor is Mg(2+). Myristoylation is not essential for its activity. In terms of processing, glycosylated. Glycosylation is essential for its activity.

The protein localises to the cytoplasm. Its subcellular location is the perinuclear region. It carries out the reaction 3 ATP = 5'-triphosphoadenylyl-(2'-&gt;5')-adenylyl-(2'-&gt;5')-adenosine + 2 diphosphate. Produced as a latent enzyme which is activated by double stranded RNA (dsRNA) generated during the course of viral infection. The dsRNA activator must be at least 15 nucleotides long, and no modification of the 2'-hydroxyl group is tolerated. ssRNA or dsDNA do not act as activators. Strongly inhibited by copper, iron and zinc ions. Partially inhibited by cobalt and nickel ions. Functionally, interferon-induced, dsRNA-activated antiviral enzyme which plays a critical role in cellular innate antiviral response. Activated by detection of double stranded RNA (dsRNA): polymerizes higher oligomers of 2'-5'-oligoadenylates (2-5A) from ATP which then bind to the inactive monomeric form of ribonuclease L (RNASEL) leading to its dimerization and subsequent activation. Activation of RNASEL leads to degradation of cellular as well as viral RNA, resulting in the inhibition of protein synthesis, thus terminating viral replication. Can mediate the antiviral effect via the classical RNASEL-dependent pathway or an alternative antiviral pathway independent of RNASEL. In addition, it may also play a role in other cellular processes such as apoptosis, cell growth, differentiation and gene regulation. May act as a negative regulator of lactation, stopping lactation in virally infected mammary gland lobules, thereby preventing transmission of viruses to neonates. Non-infected lobules would not be affected, allowing efficient pup feeding during infection. This Homo sapiens (Human) protein is 2'-5'-oligoadenylate synthase 2.